Consider the following 490-residue polypeptide: Cruciferin BnC1 (490 aa).

Positions 1-23 (MARLSSLLSFSLALLIFLHGSTA) are cleaved as a signal peptide. Disulfide bonds link cysteine 30-cysteine 63 and cysteine 106-cysteine 307. Cupin type-1 domains are found at residues 35–263 (LNAL…RTAQ) and 313–462 (DNLD…EEAR). Threonine 109 carries the phosphothreonine modification. A disordered region spans residues 113 to 164 (SSVFQPSGGSPSGEGQGQGQQGQGQGHQGQGQGQQGQQGQQGQQSQGQGFRD). Positions 122–148 (SPSGEGQGQGQQGQGQGHQGQGQGQQG) are enriched in gly residues. Residues 149–161 (QQGQQGQQSQGQG) show a composition bias toward low complexity. Phosphotyrosine is present on tyrosine 330. Serine 332 carries the phosphoserine modification. At threonine 426 the chain carries Phosphothreonine.

It belongs to the 11S seed storage protein (globulins) family. Hexamer; each subunit is composed of an acidic and a basic chain derived from a single precursor and linked by a disulfide bond.

Its function is as follows. This is a seed storage protein. The sequence is that of Cruciferin BnC1 (BnC1) from Brassica napus (Rape).